The chain runs to 267 residues: Protein TIFY 7 (267 aa).

The region spanning 113–148 (SSGSSPQLTIFYGGTISVFNDISPDKAQAIMLCAGN) is the Tify domain. Residues 220–244 (PQARKASLARFLEKRKERLMSAMPY) carry the Jas motif. A Nuclear localization signal motif is present at residues 222–229 (ARKASLAR).

This sequence belongs to the TIFY/JAZ family. Homo- and heterodimer. Interacts with MYC2, MYC3, MYC4, COI1, AFPH2/NINJA, TIFY10A/JAZ1, TIFY10B/JAZ2, TIFY6B/JAZ3, TIFY5A/JAZ8, TIFY9/JAZ10 and TIFY3A/JAZ11. Interacts with RHD6 and RSL1. In terms of processing, ubiquitinated. Targeted for degradation by the SCF(COI1) E3 ubiquitin ligase-proteasome pathway during jasmonate signaling.

The protein localises to the nucleus. Repressor of jasmonate responses. Jasmonoyl-isoleucine (JA-Ile) specifically promotes COI1-TIFY7/JAZ9 interaction. Interacts with and suppresses RHD6 and RSL1 transcription factor activities to negatively regulate jasmonate-stimulated root hair development. This chain is Protein TIFY 7 (TIFY7), found in Arabidopsis thaliana (Mouse-ear cress).